Consider the following 1906-residue polypeptide: MKFQFSSPSKIFLFSSVILILIFIGIKFELLEDTNSNRNDKFNNIINRFINYNIDDSIYKNKQQQQQFSNKIYSNEKKILLKNKIIDTTIKPSININNNNNNNNKLNNNNNNNNNNNNNNNNNNNNNNNNNNNNYYNSIEYYSSFVSRLLKSNDDDGIYYDDYQSKYKKNHYIVQFKDRINDETREQLKEFLIGTDITILKEQPFKSHIVHYIPHDSFLVFMTKEQSVLLSSKEWISWIGEHEPSNKIHLNYHEKSIGYPVYIILSGSTNSLIQRWENTLNSILTSYNSKVKLTLINQKKLKSIVYCNDESPSSSSSSSCSLIGSEKIVYKWISEQSESNYIERSEKLQTANRLSPTVIFGTKDKLVNNDRIDIPLRGKGQILSIADTGLDGSHCFFSDSKYPIPFNQVNENHRKVVTYITYHDNEDYVNGHGTHVCGSAAGTPEDSSWAISSFSGLATDAKIAFYDLSSGSSEPTPPEDYSQMYKPLYDAGARVHGDSWGSVSLQGYYGGYSDDAGGIDAFLYEYPEFSILRAAGNNELFASLLAQATAKNAITVGAEQTAHVNYVSDALEYYDFSDNANFQRPCLFDKKYCNYTTAKCCSEVSNVKGLQLCCPASIKQNASDSFTTQPQFYNENNMGSFSSKGPTHDGRLKPDIVAPGEYITSARSNGENSTDQCGDGSLPNANGLMSISGTSMATPLATAATTILRQYLVDGYFPTGESVEENKLLPTGSLLKALMINNAQLLNGTYFWSASSTNPSNAIFEQINGANLIQGWGALRMNNWLYVKSSNPTPPSRWIGIGGLGKNQKATEWKEDSLSSGLNKSYCFTYKPSSSSSGSGGGGGTPRIVATLVWTDPPSYSGAKFNLVNNLDLLLLNSDDDSIITIGNSGGSLQPAGKVAQPDTLNNVEGIIINPTKAMNYKFTIAGTNVPIGPQKFSFVFHGENGQFDWADSCPQCVDGVQFPCLITNGIGIQSCGSDLLWTKCIVQSCNEGYNYNSLKNTCDKFLSYNYIIIIVAGGTMVLIILLLMWIKYQEYKESKRDSFRRFDDGTGIFVRPKDKDAKVTPPDLYNLVSPFIIELTIATACSLVATAASILQPFYIGNIVNNIPTTKSIGEFKSDFIIIFILAFIEFLFTNVGSWISGIVNEKMVMRLQNKVFRALIAQDMGFFQRNNSALLMNVLIVDTPMLRSALTGILLSIATGVCKLVGSLVFIFTISWKLSLAFFAAVPILGLVTQIQSQFTKRLTRQLLFHNSKASQHGTESLTNMHVVTNYCKQEKEMVKYSDQLMNVFITARKLIITNTFAGTGKWLLIESLTFVILYFSAYLVIQKQFTVGLMISFSLYIGYVVDASSSLFGVYVSYIQCLASATRVFMILRSAPRKRTTLEEEEADRLAGLSGGGGGGGDNGDDKKDKQNIENGKDVLPSNIITPIDNVENSNGKQDDPNNNNNNIGNLDYSEQLDGVSTVADSTVGLTKRELKKQKEKEQKEYFKQTGISVAETPTFLPSSYTELTECRGEIEFKNVSFRYPTRPDVQVLHNINMKFEAGKCYGLVGPSGSGKSTTLELISKFYPLHGETGGKIYMDGIDIAKIRPNNLRSFVTNVHQHPFLFDATIGENIGYAIDNPTQEDIIEAAKLAYAHEFINDLPKKYDTQIGEAGNLSGGQKKRIAVARAICAKRKIMLLDEITAELDPESEEAITQSIKVLTQGHTVVMVAHKVAAVRDCDKIFVLEKGYLVEEGTHDELMANKGKYYRMFSEDKDDTPLQNNNNNKNNNNNNNNNEPSSSSTPPNDQPTPPPQEQQEQKNDQPPPPPPQEQQEQQEQQQQQQQEQQQQQQQQQQQQQQQQQQQQQQQQQQQQQQQQQNDQPPNDYDQVPPPPPLPSESPSPPTGNNDGQPLVQMDEENDEER.

Residues 1–31 (MKFQFSSPSKIFLFSSVILILIFIGIKFELL) form the signal peptide. A disordered region spans residues 96-134 (INNNNNNNNKLNNNNNNNNNNNNNNNNNNNNNNNNNNNN). The 408-residue stretch at 356 to 763 (PTVIFGTKDK…ASSTNPSNAI (408 aa)) folds into the Peptidase S8 domain. Residues aspartate 387 and histidine 432 each act as charge relay system in the active site. N-linked (GlcNAc...) asparagine glycosylation is found at asparagine 594, asparagine 621, and asparagine 672. Serine 695 serves as the catalytic Charge relay system. Asparagine 747 and asparagine 823 each carry an N-linked (GlcNAc...) asparagine glycan. The next 3 helical transmembrane spans lie at 1011-1031 (YIII…LMWI), 1076-1096 (FIIE…ASIL), and 1121-1141 (FIII…GSWI). The region spanning 1080–1363 (LTIATACSLV…LFGVYVSYIQ (284 aa)) is the ABC transmembrane type-1 domain. Residue asparagine 1172 is glycosylated (N-linked (GlcNAc...) asparagine). 3 consecutive transmembrane segments (helical) span residues 1210 to 1230 (LVFI…AVPI), 1309 to 1329 (WLLI…LVIQ), and 1332 to 1352 (FTVG…DASS). Positions 1385–1455 (LEEEEADRLA…NNNNNIGNLD (71 aa)) are disordered. Residues 1396-1405 (LSGGGGGGGD) show a composition bias toward gly residues. The span at 1407-1420 (GDDKKDKQNIENGK) shows a compositional bias: basic and acidic residues. An ABC transporter domain is found at 1518–1756 (IEFKNVSFRY…KGKYYRMFSE (239 aa)). The N-linked (GlcNAc...) asparagine glycan is linked to asparagine 1522. 1553–1560 (GPSGSGKS) is an ATP binding site. A glycan (N-linked (GlcNAc...) asparagine) is linked at asparagine 1658. A disordered region spans residues 1757 to 1906 (DKDDTPLQNN…QMDEENDEER (150 aa)). 2 stretches are compositionally biased toward low complexity: residues 1765–1779 (NNNN…NNNN) and 1814–1871 (EQQE…DYDQ). The span at 1872–1886 (VPPPPPLPSESPSPP) shows a compositional bias: pro residues.

The protein in the C-terminal section; belongs to the ABC transporter superfamily. ABCB family. Multidrug resistance exporter (TC 3.A.1.201) subfamily. This sequence in the N-terminal section; belongs to the peptidase S8 family.

It localises to the membrane. Functionally, intercellular communication via tagB may mediate integration of cellular differentiation with morphogenesis. The sequence is that of Serine protease/ABC transporter B family protein tagB (tagB) from Dictyostelium discoideum (Social amoeba).